A 218-amino-acid polypeptide reads, in one-letter code: Protein-L-isoaspartate O-methyltransferase 1 (218 aa).

Ser-69 is an active-site residue.

Belongs to the methyltransferase superfamily. L-isoaspartyl/D-aspartyl protein methyltransferase family.

Its subcellular location is the cytoplasm. The catalysed reaction is [protein]-L-isoaspartate + S-adenosyl-L-methionine = [protein]-L-isoaspartate alpha-methyl ester + S-adenosyl-L-homocysteine. Functionally, catalyzes the methyl esterification of L-isoaspartyl residues in peptides and proteins that result from spontaneous decomposition of normal L-aspartyl and L-asparaginyl residues. It plays a role in the repair and/or degradation of damaged proteins. The chain is Protein-L-isoaspartate O-methyltransferase 1 from Marinobacter nauticus (strain ATCC 700491 / DSM 11845 / VT8) (Marinobacter aquaeolei).